Here is a 349-residue protein sequence, read N- to C-terminus: S-adenosylmethionine decarboxylase proenzyme 3 (349 aa).

Residues Glu-9 and Glu-12 contribute to the active site. Position 68 (Glu-68) interacts with substrate. The active-site Schiff-base intermediate with substrate; via pyruvic acid is Ser-69. Ser-69 bears the Pyruvic acid (Ser); by autocatalysis mark. The Proton donor; for catalytic activity role is filled by Cys-83. Residues Ser-235 and His-248 each act as proton acceptor; for processing activity in the active site. Glu-252 provides a ligand contact to substrate.

It belongs to the eukaryotic AdoMetDC family. Requires pyruvate as cofactor. In terms of processing, is synthesized initially as an inactive proenzyme. Formation of the active enzyme involves a self-maturation process in which the active site pyruvoyl group is generated from an internal serine residue via an autocatalytic post-translational modification. Two non-identical subunits are generated from the proenzyme in this reaction, and the pyruvate is formed at the N-terminus of the alpha chain, which is derived from the carboxyl end of the proenzyme. The post-translation cleavage follows an unusual pathway, termed non-hydrolytic serinolysis, in which the side chain hydroxyl group of the serine supplies its oxygen atom to form the C-terminus of the beta chain, while the remainder of the serine residue undergoes an oxidative deamination to produce ammonia and the pyruvoyl group blocking the N-terminus of the alpha chain.

It carries out the reaction S-adenosyl-L-methionine + H(+) = S-adenosyl 3-(methylsulfanyl)propylamine + CO2. Its pathway is amine and polyamine biosynthesis; S-adenosylmethioninamine biosynthesis; S-adenosylmethioninamine from S-adenosyl-L-methionine: step 1/1. In terms of biological role, essential for biosynthesis of the polyamines spermidine and spermine. Essential for polyamine homeostasis, and normal plant embryogenesis, growth and development. The protein is S-adenosylmethionine decarboxylase proenzyme 3 of Arabidopsis thaliana (Mouse-ear cress).